The following is a 193-amino-acid chain: Holliday junction branch migration complex subunit RuvA (193 aa).

The tract at residues Met-1 to Leu-64 is domain I. Positions Thr-65–Leu-139 are domain II. The interval Leu-139 to Ala-143 is flexible linker. Residues Ser-144–Ala-193 are domain III.

Belongs to the RuvA family. As to quaternary structure, homotetramer. Forms an RuvA(8)-RuvB(12)-Holliday junction (HJ) complex. HJ DNA is sandwiched between 2 RuvA tetramers; dsDNA enters through RuvA and exits via RuvB. An RuvB hexamer assembles on each DNA strand where it exits the tetramer. Each RuvB hexamer is contacted by two RuvA subunits (via domain III) on 2 adjacent RuvB subunits; this complex drives branch migration. In the full resolvosome a probable DNA-RuvA(4)-RuvB(12)-RuvC(2) complex forms which resolves the HJ.

It is found in the cytoplasm. In terms of biological role, the RuvA-RuvB-RuvC complex processes Holliday junction (HJ) DNA during genetic recombination and DNA repair, while the RuvA-RuvB complex plays an important role in the rescue of blocked DNA replication forks via replication fork reversal (RFR). RuvA specifically binds to HJ cruciform DNA, conferring on it an open structure. The RuvB hexamer acts as an ATP-dependent pump, pulling dsDNA into and through the RuvAB complex. HJ branch migration allows RuvC to scan DNA until it finds its consensus sequence, where it cleaves and resolves the cruciform DNA. This is Holliday junction branch migration complex subunit RuvA from Burkholderia cenocepacia (strain HI2424).